The chain runs to 211 residues: Large ribosomal subunit protein bL25 (211 aa).

Residues 188 to 211 (APKAAKVSTDDEAAAPAEEAPAAE) are disordered. Low complexity predominate over residues 201–211 (AAPAEEAPAAE).

Belongs to the bacterial ribosomal protein bL25 family. CTC subfamily. Part of the 50S ribosomal subunit; part of the 5S rRNA/L5/L18/L25 subcomplex. Contacts the 5S rRNA. Binds to the 5S rRNA independently of L5 and L18.

This is one of the proteins that binds to the 5S RNA in the ribosome where it forms part of the central protuberance. This Colwellia psychrerythraea (strain 34H / ATCC BAA-681) (Vibrio psychroerythus) protein is Large ribosomal subunit protein bL25.